A 419-amino-acid chain; its full sequence is Acyl transferase 9 (419 aa).

Residues H161 and D362 each act as proton acceptor in the active site.

Belongs to the plant acyltransferase family.

Functionally, involved in the incorporation of ferulate into the cell wall. May act as arabinoxylan feruloyl transferase. This is Acyl transferase 9 from Oryza sativa subsp. japonica (Rice).